Consider the following 1241-residue polypeptide: Interphotoreceptor matrix proteoglycan 2 (1241 aa).

The signal sequence occupies residues 1 to 28; sequence MIMFLPLGRISLGILILFLTGGNLVSVS. The Extracellular segment spans residues 29 to 1104; that stretch reads EEIQDRMHAV…CEEFVSEPFV (1076 aa). Residue threonine 193 is glycosylated (O-linked (GalNAc...) threonine). Residues 206–234 form a disordered region; the sequence is AASERSAASPQESISNEIENVTEQPTPPA. Residues 211-229 are compositionally biased toward polar residues; it reads SAASPQESISNEIENVTEQ. An N-linked (GlcNAc...) asparagine glycan is attached at asparagine 225. A glycan (O-linked (GalNAc...) threonine) is linked at threonine 231. Residues 235–349 form the SEA 1 domain; sequence AEQIAEFSIQ…KPTAVYTISN (115 aa). The tract at residues 255–263 is hyaluronan-binding motif involved in chondroitin sulfate A-binding; the sequence is RDPSSALYR. 3 N-linked (GlcNAc...) asparagine glycosylation sites follow: asparagine 297, asparagine 316, and asparagine 366. 3 O-linked (GalNAc...) threonine glycosylation sites follow: threonine 429, threonine 430, and threonine 431. A compositionally biased stretch (low complexity) spans 431–443; it reads TISPFGFSSGPPS. Disordered regions lie at residues 431-456 and 500-520; these read TISPFGFSSGPPSATGRELHSESTLG and VAPEGRTSGSSILEDDNTEES. The O-linked (GalNAc...) threonine glycan is linked to threonine 817. Asparagine 841, asparagine 945, and asparagine 959 each carry an N-linked (GlcNAc...) asparagine glycan. In terms of domain architecture, SEA 2 spans 900-1013; that stretch reads GALVVFFSLR…YSLDVESGDD (114 aa). EGF-like domains follow at residues 1013 to 1054 and 1055 to 1096; these read DANP…LPCQ and SVCD…QHCE. Intrachain disulfides connect cysteine 1017–cysteine 1028, cysteine 1022–cysteine 1039, cysteine 1041–cysteine 1053, cysteine 1057–cysteine 1070, cysteine 1064–cysteine 1080, and cysteine 1082–cysteine 1095. Residues 1083–1091 are hyaluronan-binding motif involved in chondroitin sulfate C-binding; the sequence is RVGSNWWYR. A helical membrane pass occupies residues 1105–1125; it reads IGITIASVVSLLLVASAVVFF. At 1126–1241 the chain is on the cytoplasmic side; sequence LAKMLQAQNV…FVREHEMEEL (116 aa). The interval 1128 to 1136 is hyaluronan-binding motif involved in chondroitin sulfate A- and C-binding; it reads KMLQAQNVR. The segment at 1139–1145 is hyaluronan-binding motif involved in chondroitin sulfate C-binding; it reads RQRPTNR. The interval 1210-1218 is hyaluronan-binding motif involved in chondroitin sulfate A- and C-binding motif; sequence KEEIQERMR.

Expressed in the pineal gland and the outer layer of the retina.

The protein localises to the photoreceptor outer segment membrane. It localises to the photoreceptor inner segment membrane. The protein resides in the secreted. Its subcellular location is the extracellular space. It is found in the extracellular matrix. The protein localises to the interphotoreceptor matrix. Functionally, chondroitin sulfate- and hyaluronan-binding proteoglycan involved in the organization of interphotoreceptor matrix; may participate in the maturation and maintenance of the light-sensitive photoreceptor outer segment. Binds heparin. The chain is Interphotoreceptor matrix proteoglycan 2 (Impg2) from Rattus norvegicus (Rat).